We begin with the raw amino-acid sequence, 452 residues long: Prephenate dehydrogenase [NADP(+)] (452 aa).

14 to 43 provides a ligand contact to NADP(+); the sequence is KVIGIIGLGDMGLLYANKFTDAGWGVICCD. A Prephenate/arogenate dehydrogenase domain is found at 14 to 297; it reads KVIGIIGLGD…GKHTGLLLLD (284 aa).

It belongs to the prephenate/arogenate dehydrogenase family.

It catalyses the reaction prephenate + NADP(+) = 3-(4-hydroxyphenyl)pyruvate + CO2 + NADPH. The protein operates within amino-acid biosynthesis; L-tyrosine biosynthesis; (4-hydroxyphenyl)pyruvate from prephenate (NADP(+) route): step 1/1. This chain is Prephenate dehydrogenase [NADP(+)] (TYR1), found in Saccharomyces cerevisiae (strain ATCC 204508 / S288c) (Baker's yeast).